We begin with the raw amino-acid sequence, 676 residues long: tRNA 5-methylaminomethyl-2-thiouridine biosynthesis bifunctional protein MnmC (676 aa).

The interval Met-1–Asn-241 is tRNA (mnm(5)s(2)U34)-methyltransferase. The interval Ile-268–Lys-676 is FAD-dependent cmnm(5)s(2)U34 oxidoreductase.

This sequence in the N-terminal section; belongs to the methyltransferase superfamily. tRNA (mnm(5)s(2)U34)-methyltransferase family. It in the C-terminal section; belongs to the DAO family. It depends on FAD as a cofactor.

The protein resides in the cytoplasm. The enzyme catalyses 5-aminomethyl-2-thiouridine(34) in tRNA + S-adenosyl-L-methionine = 5-methylaminomethyl-2-thiouridine(34) in tRNA + S-adenosyl-L-homocysteine + H(+). In terms of biological role, catalyzes the last two steps in the biosynthesis of 5-methylaminomethyl-2-thiouridine (mnm(5)s(2)U) at the wobble position (U34) in tRNA. Catalyzes the FAD-dependent demodification of cmnm(5)s(2)U34 to nm(5)s(2)U34, followed by the transfer of a methyl group from S-adenosyl-L-methionine to nm(5)s(2)U34, to form mnm(5)s(2)U34. The polypeptide is tRNA 5-methylaminomethyl-2-thiouridine biosynthesis bifunctional protein MnmC (Histophilus somni (strain 2336) (Haemophilus somnus)).